The following is a 436-amino-acid chain: MCVVFSPREIVSELDRFIIGQKDAKRSVAIALRNRWRRQQLEGQIREEVMPKNILMIGPTGVGKTEIARRLAKLAGAPFVKVEATKFTEVGYVGRDVEQIIRDLVEIAISLVREKKRDEVQERAHINAEERVLEALVGKTASPATRDNFRQKLRAGELDDKEIEIEVANNSNNSAPTFDIPGMPGAQMGIMNLSDIFGKIGGRTKIRKTTVKDAFKPLIDDESEKLLDQDQIIQEALCITENDGIVFIDEIDKIATQDGGAGAAISREGVQRDLLPLVEGTIVATKYGQIKTDHILFIASGAFHVSKPSDLLPELQGRLPIRVELNALTKEDLRRILTEPEASLIKQYIALMATEDVHLEITDDAIDTLADIAVDLNARIENIGARRLQTVMERVLDEISFTAPDKAGTSFKVDATYVRQSVGELASDVDLSRFIL.

ATP contacts are provided by residues I19, 61 to 66 (GVGKTE), D249, E314, and R386.

This sequence belongs to the ClpX chaperone family. HslU subfamily. In terms of assembly, a double ring-shaped homohexamer of HslV is capped on each side by a ring-shaped HslU homohexamer. The assembly of the HslU/HslV complex is dependent on binding of ATP.

The protein resides in the cytoplasm. Its function is as follows. ATPase subunit of a proteasome-like degradation complex; this subunit has chaperone activity. The binding of ATP and its subsequent hydrolysis by HslU are essential for unfolding of protein substrates subsequently hydrolyzed by HslV. HslU recognizes the N-terminal part of its protein substrates and unfolds these before they are guided to HslV for hydrolysis. This Bartonella bacilliformis (strain ATCC 35685 / KC583 / Herrer 020/F12,63) protein is ATP-dependent protease ATPase subunit HslU.